The chain runs to 155 residues: Cyanate hydratase (155 aa).

Residues R92, E95, and S118 contribute to the active site.

Belongs to the cyanase family.

It catalyses the reaction cyanate + hydrogencarbonate + 3 H(+) = NH4(+) + 2 CO2. Catalyzes the reaction of cyanate with bicarbonate to produce ammonia and carbon dioxide. This chain is Cyanate hydratase, found in Mycobacterium avium (strain 104).